A 210-amino-acid chain; its full sequence is Proteasome subunit beta (210 aa).

The propeptide at 1 to 9 (MDNDKHLKG) is removed in mature form; by autocatalysis. T10 functions as the Nucleophile in the catalytic mechanism.

This sequence belongs to the peptidase T1B family. As to quaternary structure, the 20S proteasome core is composed of 14 alpha and 14 beta subunits that assemble into four stacked heptameric rings, resulting in a barrel-shaped structure. The two inner rings, each composed of seven catalytic beta subunits, are sandwiched by two outer rings, each composed of seven alpha subunits. The catalytic chamber with the active sites is on the inside of the barrel. Has a gated structure, the ends of the cylinder being occluded by the N-termini of the alpha-subunits. Is capped at one or both ends by the proteasome regulatory ATPase, PAN.

The protein resides in the cytoplasm. It catalyses the reaction Cleavage of peptide bonds with very broad specificity.. The formation of the proteasomal ATPase PAN-20S proteasome complex, via the docking of the C-termini of PAN into the intersubunit pockets in the alpha-rings, triggers opening of the gate for substrate entry. Interconversion between the open-gate and close-gate conformations leads to a dynamic regulation of the 20S proteasome proteolysis activity. In terms of biological role, component of the proteasome core, a large protease complex with broad specificity involved in protein degradation. This Methanococcoides burtonii (strain DSM 6242 / NBRC 107633 / OCM 468 / ACE-M) protein is Proteasome subunit beta.